A 275-amino-acid chain; its full sequence is ATP synthase subunit delta (275 aa).

Belongs to the ATPase delta chain family. In terms of assembly, F-type ATPases have 2 components, F(1) - the catalytic core - and F(0) - the membrane proton channel. F(1) has five subunits: alpha(3), beta(3), gamma(1), delta(1), epsilon(1). F(0) has three main subunits: a(1), b(2) and c(10-14). The alpha and beta chains form an alternating ring which encloses part of the gamma chain. F(1) is attached to F(0) by a central stalk formed by the gamma and epsilon chains, while a peripheral stalk is formed by the delta and b chains.

Its subcellular location is the cell membrane. Its function is as follows. F(1)F(0) ATP synthase produces ATP from ADP in the presence of a proton or sodium gradient. F-type ATPases consist of two structural domains, F(1) containing the extramembraneous catalytic core and F(0) containing the membrane proton channel, linked together by a central stalk and a peripheral stalk. During catalysis, ATP synthesis in the catalytic domain of F(1) is coupled via a rotary mechanism of the central stalk subunits to proton translocation. In terms of biological role, this protein is part of the stalk that links CF(0) to CF(1). It either transmits conformational changes from CF(0) to CF(1) or is implicated in proton conduction. The protein is ATP synthase subunit delta of Arthrobacter sp. (strain FB24).